The following is a 190-amino-acid chain: Potassium-transporting ATPase KdpC subunit (190 aa).

Residues 11 to 31 (LIVLMSLITGVAYPLVVTGVA) traverse the membrane as a helical segment.

It belongs to the KdpC family. As to quaternary structure, the system is composed of three essential subunits: KdpA, KdpB and KdpC.

The protein resides in the cell inner membrane. Its function is as follows. Part of the high-affinity ATP-driven potassium transport (or Kdp) system, which catalyzes the hydrolysis of ATP coupled with the electrogenic transport of potassium into the cytoplasm. This subunit acts as a catalytic chaperone that increases the ATP-binding affinity of the ATP-hydrolyzing subunit KdpB by the formation of a transient KdpB/KdpC/ATP ternary complex. This chain is Potassium-transporting ATPase KdpC subunit, found in Pseudomonas savastanoi pv. phaseolicola (strain 1448A / Race 6) (Pseudomonas syringae pv. phaseolicola (strain 1448A / Race 6)).